The chain runs to 364 residues: Fructose-1,6-bisphosphatase class 1 2 (364 aa).

Mg(2+) is bound by residues E101, D123, L125, and D126. Residues 126 to 129 (DGSS) and N218 each bind substrate. Position 290 (E290) interacts with Mg(2+).

This sequence belongs to the FBPase class 1 family. Homotetramer. Mg(2+) serves as cofactor.

Its subcellular location is the cytoplasm. It carries out the reaction beta-D-fructose 1,6-bisphosphate + H2O = beta-D-fructose 6-phosphate + phosphate. It functions in the pathway carbohydrate biosynthesis; gluconeogenesis. This is Fructose-1,6-bisphosphatase class 1 2 from Cupriavidus necator (strain ATCC 17699 / DSM 428 / KCTC 22496 / NCIMB 10442 / H16 / Stanier 337) (Ralstonia eutropha).